A 429-amino-acid chain; its full sequence is U3 small nucleolar RNA-associated protein 18 homolog (429 aa).

WD repeat units lie at residues 117–156 (RYTR…KKDR), 295–336 (TDDG…NSTN), 345–386 (NLVT…TFKN), and 392–428 (GKVT…HFTD).

The protein belongs to the WD repeat UTP18 family.

It is found in the nucleus. The protein resides in the nucleolus. Its function is as follows. Involved in nucleolar processing of pre-18S ribosomal RNA. The polypeptide is U3 small nucleolar RNA-associated protein 18 homolog (Caenorhabditis elegans).